We begin with the raw amino-acid sequence, 59 residues long: Bacteriocin curvacin-A (59 aa).

Residues M1–G18 constitute a propeptide that is removed on maturation. C28 and C33 form a disulfide bridge.

It belongs to the bacteriocin class IIA/YGNGV family.

Its subcellular location is the secreted. In terms of biological role, bactericidal activity; inhibits closely related Lactobacilli, Listeria monocytogenes and ivanovvi, Enterococcus faecalis, Carnobacterium sp and Brocothrix thermosphacta. This Latilactobacillus curvatus (Lactobacillus curvatus) protein is Bacteriocin curvacin-A (curA).